The chain runs to 231 residues: LexA repressor (231 aa).

A DNA-binding region (H-T-H motif) is located at residues 26-46 (FDEMKDALDLRSKSGIHRLIT). Catalysis depends on for autocatalytic cleavage activity residues S152 and K190.

Belongs to the peptidase S24 family. As to quaternary structure, homodimer.

The enzyme catalyses Hydrolysis of Ala-|-Gly bond in repressor LexA.. In terms of biological role, represses a number of genes involved in the response to DNA damage (SOS response), including recA and lexA. In the presence of single-stranded DNA, RecA interacts with LexA causing an autocatalytic cleavage which disrupts the DNA-binding part of LexA, leading to derepression of the SOS regulon and eventually DNA repair. The sequence is that of LexA repressor from Dinoroseobacter shibae (strain DSM 16493 / NCIMB 14021 / DFL 12).